Consider the following 687-residue polypeptide: Bifunctional lysine-specific demethylase and histidyl-hydroxylase NO66 (687 aa).

Residues 1 to 174 (MSDKNKKVSA…RSCPLPSKKN (174 aa)) are disordered. A compositionally biased stretch (basic and acidic residues) spans 23 to 32 (DVQKGTKNSD). Composition is skewed to low complexity over residues 33 to 50 (KNGAAKNNNNRNLASKNG) and 58 to 74 (KKNGSYSDGDNGSSSSS). The segment covering 75 to 96 (GEDEEDDSTDSSDEYESSESGE) has biased composition (acidic residues). Polar residues-rich tracts occupy residues 100 to 116 (LNSHSSQSSPETPANTR) and 136 to 156 (RTSSTPVGQSTSAARSTQQPK). A JmjC domain is found at 347–483 (NPSSYLVQLR…NLMEKLMPLV (137 aa)). Positions 387, 389, and 449 each coordinate Fe cation.

This sequence belongs to the ROX family. NO66 subfamily. The cofactor is Fe(2+).

The protein localises to the nucleus. The catalysed reaction is N(6),N(6)-dimethyl-L-lysyl(36)-[histone H3] + 2 2-oxoglutarate + 2 O2 = L-lysyl(36)-[histone H3] + 2 formaldehyde + 2 succinate + 2 CO2. In terms of biological role, oxygenase that can act as both a histone lysine demethylase and a ribosomal histidine hydroxylase. Specifically demethylates 'Lys-4' (H3K4me) and 'Lys-36' (H3K36me) of histone H3, thereby playing a central role in histone code. The sequence is that of Bifunctional lysine-specific demethylase and histidyl-hydroxylase NO66 from Drosophila persimilis (Fruit fly).